Consider the following 353-residue polypeptide: Holliday junction branch migration complex subunit RuvB (353 aa).

Residues 4-190 (TDKLQAPRVI…FGIVARLEFY (187 aa)) are large ATPase domain (RuvB-L). ATP contacts are provided by residues Leu-29, Arg-30, Gly-71, Lys-74, Thr-75, Thr-76, 137-139 (EDF), Arg-180, Tyr-190, and Arg-227. Thr-75 contributes to the Mg(2+) binding site. The interval 191-261 (TPHELAYIVG…VADAALLMLD (71 aa)) is small ATPAse domain (RuvB-S). The tract at residues 264–353 (HLGLDLMDRK…DESAELFSAP (90 aa)) is head domain (RuvB-H). 2 residues coordinate DNA: Arg-319 and Arg-324.

The protein belongs to the RuvB family. Homohexamer. Forms an RuvA(8)-RuvB(12)-Holliday junction (HJ) complex. HJ DNA is sandwiched between 2 RuvA tetramers; dsDNA enters through RuvA and exits via RuvB. An RuvB hexamer assembles on each DNA strand where it exits the tetramer. Each RuvB hexamer is contacted by two RuvA subunits (via domain III) on 2 adjacent RuvB subunits; this complex drives branch migration. In the full resolvosome a probable DNA-RuvA(4)-RuvB(12)-RuvC(2) complex forms which resolves the HJ.

It is found in the cytoplasm. It carries out the reaction ATP + H2O = ADP + phosphate + H(+). Its function is as follows. The RuvA-RuvB-RuvC complex processes Holliday junction (HJ) DNA during genetic recombination and DNA repair, while the RuvA-RuvB complex plays an important role in the rescue of blocked DNA replication forks via replication fork reversal (RFR). RuvA specifically binds to HJ cruciform DNA, conferring on it an open structure. The RuvB hexamer acts as an ATP-dependent pump, pulling dsDNA into and through the RuvAB complex. RuvB forms 2 homohexamers on either side of HJ DNA bound by 1 or 2 RuvA tetramers; 4 subunits per hexamer contact DNA at a time. Coordinated motions by a converter formed by DNA-disengaged RuvB subunits stimulates ATP hydrolysis and nucleotide exchange. Immobilization of the converter enables RuvB to convert the ATP-contained energy into a lever motion, pulling 2 nucleotides of DNA out of the RuvA tetramer per ATP hydrolyzed, thus driving DNA branch migration. The RuvB motors rotate together with the DNA substrate, which together with the progressing nucleotide cycle form the mechanistic basis for DNA recombination by continuous HJ branch migration. Branch migration allows RuvC to scan DNA until it finds its consensus sequence, where it cleaves and resolves cruciform DNA. This Aromatoleum aromaticum (strain DSM 19018 / LMG 30748 / EbN1) (Azoarcus sp. (strain EbN1)) protein is Holliday junction branch migration complex subunit RuvB.